The sequence spans 606 residues: Putative mitochondrial ATP-dependent helicase irc3 (606 aa).

Positions 40–201 (NAFDEGKRRI…ACGLDEIVYH (162 aa)) constitute a Helicase ATP-binding domain. Residue 53-60 (LATGSGKT) coordinates ATP. The DEAH box motif lies at 148–151 (DEVH). The Helicase C-terminal domain maps to 246–398 (QSEKAIFEIP…LSPDEVENFY (153 aa)).

This sequence belongs to the helicase family. IRC3 subfamily.

The protein resides in the mitochondrion. The sequence is that of Putative mitochondrial ATP-dependent helicase irc3 (irc3) from Schizosaccharomyces pombe (strain 972 / ATCC 24843) (Fission yeast).